The chain runs to 389 residues: Na(+)/H(+) antiporter NhaA (389 aa).

11 consecutive transmembrane segments (helical) span residues 14–34 (AGGI…NSPL), 59–79 (LILW…GLEV), 95–115 (SLPT…YLLF), 124–144 (AGWA…MALL), 154–174 (VFLL…IALF), 177–197 (TDLS…LVGL), 213–233 (LILW…GVII), 257–277 (PWST…VYVG), 292–312 (IALG…YIAV), 328–348 (IAPV…IASL), and 363–383 (LGTL…LSKV).

This sequence belongs to the NhaA Na(+)/H(+) (TC 2.A.33) antiporter family.

Its subcellular location is the cell inner membrane. The enzyme catalyses Na(+)(in) + 2 H(+)(out) = Na(+)(out) + 2 H(+)(in). In terms of biological role, na(+)/H(+) antiporter that extrudes sodium in exchange for external protons. In Shewanella baltica (strain OS155 / ATCC BAA-1091), this protein is Na(+)/H(+) antiporter NhaA.